The primary structure comprises 765 residues: FHF complex subunit HOOK interacting protein 2A (765 aa).

2 stretches are compositionally biased toward polar residues: residues Leu200–Gln209 and Asn538–Pro550. Disordered stretches follow at residues Leu200 to Asp234 and Asn538 to Lys562.

Belongs to the FHIP family.

Functionally, may be required for proper functioning of the nervous system. This is FHF complex subunit HOOK interacting protein 2A (FHIP2A) from Bos taurus (Bovine).